A 917-amino-acid chain; its full sequence is von Willebrand factor A domain-containing protein DDB_G0285975 (917 aa).

Residues 12–51 (DTTTTTTPTTPTTPTTPTTTPTTTTTPTTTPTTTTTSTTP) are disordered. A compositionally biased stretch (low complexity) spans 13 to 51 (TTTTTTPTTPTTPTTPTTTPTTTTTPTTTPTTTTTSTTP). A VIT domain is found at 87-215 (RYNTGLKNIS…NVTIHLTIIS (129 aa)). Residues 339–507 (EFIFLIDCSG…NFEEQVMKLV (169 aa)) enclose the VWFA domain. Residues 679–741 (LFSSENRNQT…INSIPQKSNI (63 aa)) form the t-SNARE coiled-coil homology domain. 2 stretches are compositionally biased toward low complexity: residues 751–760 (SPSEVSTSKS) and 774–818 (NNNN…NNNN). The segment at 751-822 (SPSEVSTSKS…NNNNNNSDNS (72 aa)) is disordered.

This is von Willebrand factor A domain-containing protein DDB_G0285975 from Dictyostelium discoideum (Social amoeba).